Here is a 788-residue protein sequence, read N- to C-terminus: Bifunctional purine biosynthetic protein ADE1 (788 aa).

Positions 1-429 (MSLRILLVGN…NRKDIAYKAF (429 aa)) are GARS. The region spanning 114–323 (KDFMKKHNIP…LAEVMLACVE (210 aa)) is the ATP-grasp domain. Residue 140 to 201 (VKKVGHRVVI…EEFLEGDELS (62 aa)) participates in ATP binding. Residues Glu291 and Asn293 each coordinate Mg(2+). An AIRS region spans residues 439–752 (ITYAQAGVSI…VVKQEKVAEV (314 aa)).

This sequence in the N-terminal section; belongs to the GARS family. The protein in the C-terminal section; belongs to the AIR synthase family. It depends on Mg(2+) as a cofactor. The cofactor is Mn(2+).

The protein resides in the cytoplasm. Its subcellular location is the cytosol. The enzyme catalyses 5-phospho-beta-D-ribosylamine + glycine + ATP = N(1)-(5-phospho-beta-D-ribosyl)glycinamide + ADP + phosphate + H(+). The catalysed reaction is 2-formamido-N(1)-(5-O-phospho-beta-D-ribosyl)acetamidine + ATP = 5-amino-1-(5-phospho-beta-D-ribosyl)imidazole + ADP + phosphate + H(+). It participates in purine metabolism; IMP biosynthesis via de novo pathway; 5-amino-1-(5-phospho-D-ribosyl)imidazole from N(2)-formyl-N(1)-(5-phospho-D-ribosyl)glycinamide: step 2/2. The protein operates within purine metabolism; IMP biosynthesis via de novo pathway; N(1)-(5-phospho-D-ribosyl)glycinamide from 5-phospho-alpha-D-ribose 1-diphosphate: step 2/2. Functionally, catalyzes the second and fifth step in the 'de novo' purine biosynthesis pathway; contains phosphoribosylamine--glycine ligase (GARS) and phosphoribosylformylglycinamidine cyclo-ligase (AIRS) activities. The chain is Bifunctional purine biosynthetic protein ADE1 from Yarrowia lipolytica (strain CLIB 122 / E 150) (Yeast).